A 408-amino-acid polypeptide reads, in one-letter code: 1-deoxy-D-xylulose 5-phosphate reductoisomerase (408 aa).

NADPH contacts are provided by T27, G28, S29, I30, A53, R54, N55, and N140. Position 141 (K141) interacts with 1-deoxy-D-xylulose 5-phosphate. An NADPH-binding site is contributed by E142. D166 provides a ligand contact to Mn(2+). Residues S167, E168, S192, and H215 each coordinate 1-deoxy-D-xylulose 5-phosphate. E168 serves as a coordination point for Mn(2+). G221 is a binding site for NADPH. Residues S228, N233, K234, and E237 each coordinate 1-deoxy-D-xylulose 5-phosphate. E237 provides a ligand contact to Mn(2+).

Belongs to the DXR family. Mg(2+) is required as a cofactor. The cofactor is Mn(2+).

It catalyses the reaction 2-C-methyl-D-erythritol 4-phosphate + NADP(+) = 1-deoxy-D-xylulose 5-phosphate + NADPH + H(+). The protein operates within isoprenoid biosynthesis; isopentenyl diphosphate biosynthesis via DXP pathway; isopentenyl diphosphate from 1-deoxy-D-xylulose 5-phosphate: step 1/6. In terms of biological role, catalyzes the NADPH-dependent rearrangement and reduction of 1-deoxy-D-xylulose-5-phosphate (DXP) to 2-C-methyl-D-erythritol 4-phosphate (MEP). The chain is 1-deoxy-D-xylulose 5-phosphate reductoisomerase from Nitratidesulfovibrio vulgaris (strain DP4) (Desulfovibrio vulgaris).